The sequence spans 284 residues: Tropomyosin (284 aa).

The stretch at 1 to 273 forms a coiled coil; that stretch reads MDAIKKKMVA…KEKYKAISDE (273 aa). Residues 110-130 show a composition bias toward basic and acidic residues; sequence SGKLEEASKAADESERNRKVL. A disordered region spans residues 110–134; that stretch reads SGKLEEASKAADESERNRKVLENLN.

The protein belongs to the tropomyosin family. As to quaternary structure, homodimer.

Tropomyosin, in association with the troponin complex, plays a central role in the calcium dependent regulation of muscle contraction. This chain is Tropomyosin, found in Perna viridis (Asian green mussel).